Here is a 718-residue protein sequence, read N- to C-terminus: Catalase-peroxidase (718 aa).

Positions 92–220 (WHAAGTYRTA…LASVMMGLIY (129 aa)) form a cross-link, tryptophyl-tyrosyl-methioninium (Trp-Tyr) (with M-246). The active-site Proton acceptor is H93. The tryptophyl-tyrosyl-methioninium (Tyr-Met) (with W-92) cross-link spans 220–246 (YVNPEGVDGHPDPLKTANDVRVTFERM). A heme b-binding site is contributed by H261.

Belongs to the peroxidase family. Peroxidase/catalase subfamily. Homodimer or homotetramer. It depends on heme b as a cofactor. Post-translationally, formation of the three residue Trp-Tyr-Met cross-link is important for the catalase, but not the peroxidase activity of the enzyme.

The enzyme catalyses H2O2 + AH2 = A + 2 H2O. The catalysed reaction is 2 H2O2 = O2 + 2 H2O. Functionally, bifunctional enzyme with both catalase and broad-spectrum peroxidase activity. The polypeptide is Catalase-peroxidase (Shewanella halifaxensis (strain HAW-EB4)).